The chain runs to 267 residues: MRFSIQPTILFFDSGVGGLSVYKETKQLLPDCHYLYGFDNGFFPYSEKDEKDIIDRTLRICQKINQTYPLDLIVIACNTASTVVLPELRRNFSIPIVGTVPAIKPAAEMSETKHIGLIATKGTIKRTYVNDLIKNYAYHCMVEKIGSTKLVEIAEQKLRGGEVDLNVLKQELSPWKTMKSLDSVVLGCTHFPLIKEEIECCLPQVKFFVSSGKAIAKRVKFLLKGIEVRSKIQKKNLIFCTKPLEDDKSVQQILDFGEFENLVILSD.

Substrate contacts are provided by residues 13–14 (DS) and 45–46 (YS). The active-site Proton donor/acceptor is the Cys-77. Residue 78 to 79 (NT) participates in substrate binding. The active-site Proton donor/acceptor is the Cys-188. Residue 189 to 190 (TH) participates in substrate binding.

It belongs to the aspartate/glutamate racemases family.

It catalyses the reaction L-glutamate = D-glutamate. It participates in cell wall biogenesis; peptidoglycan biosynthesis. Provides the (R)-glutamate required for cell wall biosynthesis. The protein is Glutamate racemase of Histophilus somni (strain 2336) (Haemophilus somnus).